Here is a 91-residue protein sequence, read N- to C-terminus: Large ribosomal subunit protein bL27 (91 aa).

The segment at 1–25 (MAHKKGAASSNNGRDSESKRLGVKR) is disordered.

It belongs to the bacterial ribosomal protein bL27 family.

The chain is Large ribosomal subunit protein bL27 from Corynebacterium kroppenstedtii (strain DSM 44385 / JCM 11950 / CIP 105744 / CCUG 35717).